The sequence spans 360 residues: Heme A synthase (360 aa).

Helical transmembrane passes span 29–49 (WLFLMAALVVAMVAVGGATRL), 111–131 (FLGRLIGLCFFLPLGWFWWTG), 139–159 (LGLVGLGVLGGLQGAVGWIMV), 175–195 (LAAHLTLASAIFAGLVWLAAG), 210–230 (LTALLLPVATLLQIALGGLVA), 269–289 (VALVQLNHRLVAYALLALALL), 309–329 (ALAGLVAAQAMLGITTLLLAV), and 330–350 (PLWAGLAHQVTAMLVLGMAVA). Heme is bound at residue histidine 276. Heme is bound at residue histidine 337.

The protein belongs to the COX15/CtaA family. Type 2 subfamily. Interacts with CtaB. The cofactor is heme b.

The protein localises to the cell membrane. The catalysed reaction is Fe(II)-heme o + 2 A + H2O = Fe(II)-heme a + 2 AH2. It participates in porphyrin-containing compound metabolism; heme A biosynthesis; heme A from heme O: step 1/1. Catalyzes the conversion of heme O to heme A by two successive hydroxylations of the methyl group at C8. The first hydroxylation forms heme I, the second hydroxylation results in an unstable dihydroxymethyl group, which spontaneously dehydrates, resulting in the formyl group of heme A. This is Heme A synthase from Methylobacterium sp. (strain 4-46).